The primary structure comprises 139 residues: Large ribosomal subunit protein bL9m (139 aa).

Residues 83-121 are disordered; sequence DHQQLSKRHETEVQKNMELRKESVFGHKKEEKPKEEKKG.

It belongs to the bacterial ribosomal protein bL9 family. In terms of assembly, component of the mitochondrial large ribosomal subunit (mt-LSU). Mature yeast 74S mitochondrial ribosomes consist of a small (37S) and a large (54S) subunit. The 37S small subunit contains a 15S ribosomal RNA (15S mt-rRNA) and 34 different proteins. The 54S large subunit contains a 21S rRNA (21S mt-rRNA) and 46 different proteins.

It is found in the mitochondrion. Functionally, component of the mitochondrial ribosome (mitoribosome), a dedicated translation machinery responsible for the synthesis of mitochondrial genome-encoded proteins, including at least some of the essential transmembrane subunits of the mitochondrial respiratory chain. The mitoribosomes are attached to the mitochondrial inner membrane and translation products are cotranslationally integrated into the membrane. This Saccharomyces cerevisiae (strain ATCC 204508 / S288c) (Baker's yeast) protein is Large ribosomal subunit protein bL9m (MRPL50).